The primary structure comprises 231 residues: Adenosine 5'-phosphosulfate reductase (231 aa).

[4Fe-4S] cluster-binding residues include C118, C119, C201, and C204. C227 (nucleophile; cysteine thiosulfonate intermediate) is an active-site residue.

The protein belongs to the PAPS reductase family. CysH subfamily. [4Fe-4S] cluster serves as cofactor.

It is found in the cytoplasm. The catalysed reaction is [thioredoxin]-disulfide + sulfite + AMP + 2 H(+) = adenosine 5'-phosphosulfate + [thioredoxin]-dithiol. It functions in the pathway sulfur metabolism; hydrogen sulfide biosynthesis; sulfite from sulfate. Its function is as follows. Catalyzes the formation of sulfite from adenosine 5'-phosphosulfate (APS) using thioredoxin as an electron donor. The sequence is that of Adenosine 5'-phosphosulfate reductase from Halalkalibacterium halodurans (strain ATCC BAA-125 / DSM 18197 / FERM 7344 / JCM 9153 / C-125) (Bacillus halodurans).